The sequence spans 60 residues: Cytotoxin 8 (60 aa).

4 disulfides stabilise this stretch: Cys-3/Cys-21, Cys-14/Cys-38, Cys-42/Cys-53, and Cys-54/Cys-59.

Belongs to the three-finger toxin family. Short-chain subfamily. Type IA cytotoxin sub-subfamily. As to quaternary structure, monomer in solution; Homodimer and oligomer in the presence of negatively charged lipids forming a pore with a size ranging between 20 and 30 Angstroms. As to expression, expressed by the venom gland.

It localises to the secreted. Its subcellular location is the target cell membrane. Shows cytolytic activity on many different cells by forming pore in lipid membranes. In vivo, increases heart rate or kills the animal by cardiac arrest. In addition, it binds to heparin with high affinity, interacts with Kv channel-interacting protein 1 (KCNIP1) in a calcium-independent manner, and binds to integrin alpha-V/beta-3 (ITGAV/ITGB3) with moderate affinity. Has hemolytic activity towards human erythrocytes (EC(50)=0.074 uM) and cytolytic activity towards various cell lines. This is Cytotoxin 8 from Naja naja (Indian cobra).